Here is a 77-residue protein sequence, read N- to C-terminus: Defensin-like protein 91 (77 aa).

A signal peptide spans 1–27 (METKKISYFLLPSLMIVALIFQPMCSA). 4 cysteine pairs are disulfide-bonded: C38–C75, C43–C64, C49–C73, and C53–C74.

Belongs to the DEFL family.

It localises to the secreted. This chain is Defensin-like protein 91 (LCR47), found in Arabidopsis thaliana (Mouse-ear cress).